Reading from the N-terminus, the 57-residue chain is Probable mRNA interferase HicA 1 (57 aa).

The protein belongs to the HicA mRNA interferase family. As to quaternary structure, probably forms a complex with the cognate antitoxin HicB 1 which inhibits the mRNA interferase activity.

Functionally, toxic component of a type II toxin-antitoxin (TA) system. A probable translation-independent mRNA interferase. The polypeptide is Probable mRNA interferase HicA 1 (hicA1) (Photorhabdus laumondii subsp. laumondii (strain DSM 15139 / CIP 105565 / TT01) (Photorhabdus luminescens subsp. laumondii)).